The sequence spans 421 residues: Forkhead box protein J1 (421 aa).

Disordered regions lie at residues 1–32 (MAESWLRLCGAGPGEEAGPEGGMEEPDALDDS) and 77–110 (ADPACLGQPHTPGKPTSSCTSRSAPPGLQAPPPD). Positions 11–21 (AGPGEEAGPEG) are enriched in gly residues. Residues 90 to 99 (KPTSSCTSRS) are compositionally biased toward polar residues. The segment at residues 120-210 (VKPPYSYATL…YAERLLSGAF (91 aa)) is a DNA-binding region (fork-head).

The protein belongs to the FOXJ1 family. In terms of tissue distribution, predominantly expressed in tissues containing motile cilia.

The protein resides in the nucleus. Transcription factor specifically required for the formation of motile cilia. Acts by activating transcription of genes that mediate assembly of motile cilia, such as CFAP157. Binds the DNA consensus sequences 5'-HWDTGTTTGTTTA-3' or 5'-KTTTGTTGTTKTW-3' (where H is not G, W is A or T, D is not C, and K is G or T). Activates the transcription of a variety of ciliary proteins in the developing brain and lung. The protein is Forkhead box protein J1 of Mus musculus (Mouse).